Here is a 64-residue protein sequence, read N- to C-terminus: Conotoxin reg3k (64 aa).

The N-terminal stretch at 1 to 20 (MMFKLGVLLTICLLLFPLTA) is a signal peptide. Residues 21–48 (LQLDWDQPGDHMLDISSEIDDRWFDPVR) constitute a propeptide that is removed on maturation. 3 cysteine pairs are disulfide-bonded: C50–C60, C51–C58, and C56–C61. P59 carries the 4-hydroxyproline modification.

As to expression, expressed by the venom duct.

It is found in the secreted. The polypeptide is Conotoxin reg3k (Conus regius (Crown cone)).